A 179-amino-acid polypeptide reads, in one-letter code: GTP-dependent dephospho-CoA kinase (179 aa).

Positions 55, 57, 74, 76, and 128 each coordinate GTP.

The protein belongs to the GTP-dependent DPCK family.

It catalyses the reaction 3'-dephospho-CoA + GTP = GDP + CoA + H(+). Its pathway is cofactor biosynthesis; coenzyme A biosynthesis. In terms of biological role, catalyzes the GTP-dependent phosphorylation of the 3'-hydroxyl group of dephosphocoenzyme A to form coenzyme A (CoA). This is GTP-dependent dephospho-CoA kinase from Saccharolobus islandicus (strain M.16.4 / Kamchatka #3) (Sulfolobus islandicus).